A 244-amino-acid chain; its full sequence is Small ribosomal subunit protein uS2 (244 aa).

This sequence belongs to the universal ribosomal protein uS2 family.

This is Small ribosomal subunit protein uS2 from Buchnera aphidicola subsp. Acyrthosiphon pisum (strain 5A).